The following is a 279-amino-acid chain: Coiled-coil domain-containing protein 117 (279 aa).

Residues 1 to 82 (MAALGRPFSG…REEEEDDDCP (82 aa)) form a disordered region. Arg-48 is subject to Omega-N-methylarginine. Ser-53 carries the phosphoserine modification. Positions 63 to 72 (VSVHCKKKHK) are enriched in basic residues. Residues 141–168 (QCEVARRKLQEIEDRIIDEDEEVEADRN) adopt a coiled-coil conformation. The segment at 217–279 (LLSDKPKPSS…ATSTEEEMEL (63 aa)) is disordered. Composition is skewed to polar residues over residues 224–235 (PSSNTKNYTGES) and 262–272 (SLYNSLETATS).

As to quaternary structure, interacts with CIAO2B; the interaction is direct. Interacts with MMS19; the interaction is indirect.

Its subcellular location is the cytoplasm. The protein localises to the cytoskeleton. It localises to the spindle. The protein resides in the nucleus. Its function is as follows. Facilitates DNA repair, cell cycle progression, and cell proliferation through its interaction with CIAO2B. This Homo sapiens (Human) protein is Coiled-coil domain-containing protein 117.